The chain runs to 951 residues: MLPLPSELQIQAQSIKQRFSELPAPPDLRDEDIAVLALSDFVSDMLLIHPQWLEELHQQPPQPQEWQYYSQWLSQALAGVQDEAALLTALRLFRRRVMVRIAWSQVLQTSGTAETLQQLSTLAESMIIAARDWLYQVCCRELGTPCNRQGVPQPLLILGMGKLGGGELNFSSDIDLIFAYPENGQTQGGRRELDNAQFFTRLGQRLIKALDQHTIDGFVYRVDMRLRPFGDSGPLVLSFAALEDYYQEQGRDWERYAMVKARLMGGADDPYSQELRQMLRPFVFRRYIDFSVIQSLRNMKGMIAREVRRRGLKDNIKLGAGGIREIEFITQVFQLIRGGREPRLQERALLPTLQAVAELGLLPEQQVADLSGSYLFLRRLENLLQAIADEQTQTLPNDPLNQARLAWGMGYADWAAMSTALENHMQAVRVVFDDLIGDETPDIGEDPSHGLYKSLWQDVLEESDLAPLTPHLEEAARRQLLATISGFRHDVDKRTIGPRGREVLDQLMPRLFAEVCPRPDANVALSRLILLLLSIVTRTTYLELLVEYHAALKHVIRLCSASPMVASQLARYPLLLDELLDPQSLYQPLAPSAYRDELRQYLLRVPEDDEEQQLEALRQFKQAQQLRIAAGDITEALPVMKVSDHLTYLAEAIIDAVIQQAWNQMVARYGQPSHLQQSEGRGFAVIGYGKLGGWELGYSSDLDLVFLLDCPLDVMTDGDRSIDGRQFYLRLAQRIMHLFSTRTSSGILYEVDARLRPSGEAGMLVSTIEAFADYQRNEAWTWEHQALVRARIVYGSPKLHQQFDAIRQQILCRHREDPQLQQEVREMREKMRNHLGSKQRDIFDIKADAGGITDIEFIAQYLVLRYAASEPRLTRWSDNVRIFESMAHYDIMSPEEAAALTRAYVTMRDEIHHLALQEQSSKVAADSFIAEREQVAASWHKWLAANDANVS.

The segment at 1-440 (MLPLPSELQI…VFDDLIGDET (440 aa)) is adenylyl removase. Positions 449 to 951 (HGLYKSLWQD…WLAANDANVS (503 aa)) are adenylyl transferase.

The protein belongs to the GlnE family. Requires Mg(2+) as cofactor.

It carries out the reaction [glutamine synthetase]-O(4)-(5'-adenylyl)-L-tyrosine + phosphate = [glutamine synthetase]-L-tyrosine + ADP. It catalyses the reaction [glutamine synthetase]-L-tyrosine + ATP = [glutamine synthetase]-O(4)-(5'-adenylyl)-L-tyrosine + diphosphate. Involved in the regulation of glutamine synthetase GlnA, a key enzyme in the process to assimilate ammonia. When cellular nitrogen levels are high, the C-terminal adenylyl transferase (AT) inactivates GlnA by covalent transfer of an adenylyl group from ATP to specific tyrosine residue of GlnA, thus reducing its activity. Conversely, when nitrogen levels are low, the N-terminal adenylyl removase (AR) activates GlnA by removing the adenylyl group by phosphorolysis, increasing its activity. The regulatory region of GlnE binds the signal transduction protein PII (GlnB) which indicates the nitrogen status of the cell. The protein is Bifunctional glutamine synthetase adenylyltransferase/adenylyl-removing enzyme of Yersinia pestis bv. Antiqua (strain Antiqua).